The following is a 121-amino-acid chain: NADH-quinone oxidoreductase subunit A 1 (121 aa).

Transmembrane regions (helical) follow at residues I11–A31, L65–V85, and M90–I110.

It belongs to the complex I subunit 3 family. In terms of assembly, NDH-1 is composed of 14 different subunits. Subunits NuoA, H, J, K, L, M, N constitute the membrane sector of the complex.

The protein localises to the cell inner membrane. The catalysed reaction is a quinone + NADH + 5 H(+)(in) = a quinol + NAD(+) + 4 H(+)(out). Its function is as follows. NDH-1 shuttles electrons from NADH, via FMN and iron-sulfur (Fe-S) centers, to quinones in the respiratory chain. The immediate electron acceptor for the enzyme in this species is believed to be ubiquinone. Couples the redox reaction to proton translocation (for every two electrons transferred, four hydrogen ions are translocated across the cytoplasmic membrane), and thus conserves the redox energy in a proton gradient. The chain is NADH-quinone oxidoreductase subunit A 1 from Rhizobium meliloti (strain 1021) (Ensifer meliloti).